The chain runs to 182 residues: ATP-dependent protease subunit HslV (182 aa).

The active site involves Thr10. 3 residues coordinate Na(+): Ala164, Cys167, and Thr170.

This sequence belongs to the peptidase T1B family. HslV subfamily. As to quaternary structure, a double ring-shaped homohexamer of HslV is capped on each side by a ring-shaped HslU homohexamer. The assembly of the HslU/HslV complex is dependent on binding of ATP.

The protein resides in the cytoplasm. It catalyses the reaction ATP-dependent cleavage of peptide bonds with broad specificity.. With respect to regulation, allosterically activated by HslU binding. Functionally, protease subunit of a proteasome-like degradation complex believed to be a general protein degrading machinery. The polypeptide is ATP-dependent protease subunit HslV (Chelativorans sp. (strain BNC1)).